The chain runs to 240 residues: Ribonuclease PH (240 aa).

Residues Arg87 and 125-127 (GTR) each bind phosphate.

The protein belongs to the RNase PH family. In terms of assembly, homohexameric ring arranged as a trimer of dimers.

It carries out the reaction tRNA(n+1) + phosphate = tRNA(n) + a ribonucleoside 5'-diphosphate. Phosphorolytic 3'-5' exoribonuclease that plays an important role in tRNA 3'-end maturation. Removes nucleotide residues following the 3'-CCA terminus of tRNAs; can also add nucleotides to the ends of RNA molecules by using nucleoside diphosphates as substrates, but this may not be physiologically important. Probably plays a role in initiation of 16S rRNA degradation (leading to ribosome degradation) during starvation. The polypeptide is Ribonuclease PH (Pseudomonas syringae pv. syringae (strain B728a)).